The primary structure comprises 372 residues: DNA double-strand break repair protein Mre11 (372 aa).

Mn(2+) contacts are provided by D8, H10, D49, and N84. The active-site Proton donor is the H85. Mn(2+) is bound by residues H161, H190, and H192.

The protein belongs to the MRE11/RAD32 family. As to quaternary structure, homodimer. Forms a heterotetramer composed of two Mre11 subunits and two Rad50 subunits. The cofactor is Mn(2+).

With respect to regulation, nuclease activity is regulated by Rad50. Its function is as follows. Part of the Rad50/Mre11 complex, which is involved in the early steps of DNA double-strand break (DSB) repair. The complex may facilitate opening of the processed DNA ends to aid in the recruitment of HerA and NurA. Mre11 binds to DSB ends and has both double-stranded 3'-5' exonuclease activity and single-stranded endonuclease activity. This Methanococcus maripaludis (strain DSM 14266 / JCM 13030 / NBRC 101832 / S2 / LL) protein is DNA double-strand break repair protein Mre11.